The following is a 262-amino-acid chain: Inner membrane protein YcfZ (262 aa).

Over 1-4 (MKKF) the chain is Cytoplasmic. The helical transmembrane segment at 5–27 (IILLSLLILLPLTAASKPLIPIM) threads the bilayer. The Periplasmic portion of the chain corresponds to 28-182 (KTLFTDVTGT…HENAPPGSTN (155 aa)). Residues 183-202 (TLGFIAWAATFILFSRIFYY) traverse the membrane as a helical segment. Residues 203 to 206 (TTRF) lie on the Cytoplasmic side of the membrane. The helical transmembrane segment at 207 to 229 (IYALKFAVAMTIANMGYQALCLY) threads the bilayer. Residues 230 to 238 (IDNSFAITR) lie on the Periplasmic side of the membrane. A helical transmembrane segment spans residues 239–258 (ISPLWAGLIGVCTFIAALLL). The Cytoplasmic portion of the chain corresponds to 259–262 (TSKR).

Its subcellular location is the cell inner membrane. This Escherichia coli (strain K12) protein is Inner membrane protein YcfZ (ycfZ).